The chain runs to 274 residues: tRNA pseudouridine synthase A (274 aa).

Asp56 serves as the catalytic Nucleophile. Residue Tyr109 participates in substrate binding.

It belongs to the tRNA pseudouridine synthase TruA family.

The enzyme catalyses uridine(38/39/40) in tRNA = pseudouridine(38/39/40) in tRNA. Its function is as follows. Formation of pseudouridine at positions 38, 39 and 40 in the anticodon stem and loop of transfer RNAs. The sequence is that of tRNA pseudouridine synthase A from Methanosphaera stadtmanae (strain ATCC 43021 / DSM 3091 / JCM 11832 / MCB-3).